The sequence spans 136 residues: Small ribosomal subunit protein uS9 (136 aa).

This sequence belongs to the universal ribosomal protein uS9 family.

The chain is Small ribosomal subunit protein uS9 from Borreliella burgdorferi (strain ZS7) (Borrelia burgdorferi).